We begin with the raw amino-acid sequence, 249 residues long: Phosphatidylglycerol--prolipoprotein diacylglyceryl transferase (249 aa).

The next 7 helical transmembrane spans lie at 11-31 (LKIY…VILL), 49-69 (AIVG…IVDI), 82-102 (LGNG…VYLY), 116-136 (LVVP…FLAG), 163-183 (LHPT…FLLW), 192-212 (GRVF…VEFL), and 223-243 (LSTS…VFNI). Arg-129 is a binding site for a 1,2-diacyl-sn-glycero-3-phospho-(1'-sn-glycerol).

Belongs to the Lgt family.

The protein resides in the cell membrane. The catalysed reaction is L-cysteinyl-[prolipoprotein] + a 1,2-diacyl-sn-glycero-3-phospho-(1'-sn-glycerol) = an S-1,2-diacyl-sn-glyceryl-L-cysteinyl-[prolipoprotein] + sn-glycerol 1-phosphate + H(+). Its pathway is protein modification; lipoprotein biosynthesis (diacylglyceryl transfer). Functionally, catalyzes the transfer of the diacylglyceryl group from phosphatidylglycerol to the sulfhydryl group of the N-terminal cysteine of a prolipoprotein, the first step in the formation of mature lipoproteins. The protein is Phosphatidylglycerol--prolipoprotein diacylglyceryl transferase of Clostridium tetani (strain Massachusetts / E88).